An 84-amino-acid polypeptide reads, in one-letter code: UPF0153 protein PA1578.1 (84 aa).

The protein belongs to the UPF0153 family.

This Pseudomonas aeruginosa (strain ATCC 15692 / DSM 22644 / CIP 104116 / JCM 14847 / LMG 12228 / 1C / PRS 101 / PAO1) protein is UPF0153 protein PA1578.1.